The primary structure comprises 634 residues: Chaperone protein HtpG (634 aa).

The interval 1–342 (MSVETQKETL…SNDLSLNVSR (342 aa)) is a; substrate-binding. The interval 343–559 (EILQKDPVID…EQDLGLQMRQ (217 aa)) is b. The segment at 560-634 (ILEASGQKVP…LNKLLVELSA (75 aa)) is c.

The protein belongs to the heat shock protein 90 family. Homodimer.

The protein localises to the cytoplasm. Functionally, molecular chaperone. Has ATPase activity. This chain is Chaperone protein HtpG, found in Ectopseudomonas mendocina (strain ymp) (Pseudomonas mendocina).